Reading from the N-terminus, the 513-residue chain is ATP synthase subunit alpha (513 aa).

171 to 178 (GDRQIGKT) provides a ligand contact to ATP.

This sequence belongs to the ATPase alpha/beta chains family. F-type ATPases have 2 components, CF(1) - the catalytic core - and CF(0) - the membrane proton channel. CF(1) has five subunits: alpha(3), beta(3), gamma(1), delta(1), epsilon(1). CF(0) has three main subunits: a(1), b(2) and c(9-12). The alpha and beta chains form an alternating ring which encloses part of the gamma chain. CF(1) is attached to CF(0) by a central stalk formed by the gamma and epsilon chains, while a peripheral stalk is formed by the delta and b chains.

Its subcellular location is the cell membrane. It catalyses the reaction ATP + H2O + 4 H(+)(in) = ADP + phosphate + 5 H(+)(out). Functionally, produces ATP from ADP in the presence of a proton gradient across the membrane. The alpha chain is a regulatory subunit. The chain is ATP synthase subunit alpha from Wolbachia pipientis wMel.